Reading from the N-terminus, the 420-residue chain is 3-phosphoshikimate 1-carboxyvinyltransferase (420 aa).

Residues K20, S21, and R25 each contribute to the 3-phosphoshikimate site. Phosphoenolpyruvate is bound at residue K20. Residue R119 participates in phosphoenolpyruvate binding. 7 residues coordinate 3-phosphoshikimate: S161, S162, Q163, S189, D303, Q326, and K330. Q163 contacts phosphoenolpyruvate. D303 functions as the Proton acceptor in the catalytic mechanism. Positions 334, 375, and 400 each coordinate phosphoenolpyruvate.

It belongs to the EPSP synthase family. Monomer.

Its subcellular location is the cytoplasm. It carries out the reaction 3-phosphoshikimate + phosphoenolpyruvate = 5-O-(1-carboxyvinyl)-3-phosphoshikimate + phosphate. It participates in metabolic intermediate biosynthesis; chorismate biosynthesis; chorismate from D-erythrose 4-phosphate and phosphoenolpyruvate: step 6/7. In terms of biological role, catalyzes the transfer of the enolpyruvyl moiety of phosphoenolpyruvate (PEP) to the 5-hydroxyl of shikimate-3-phosphate (S3P) to produce enolpyruvyl shikimate-3-phosphate and inorganic phosphate. This Dehalococcoides mccartyi (strain ATCC BAA-2100 / JCM 16839 / KCTC 5957 / BAV1) protein is 3-phosphoshikimate 1-carboxyvinyltransferase.